The chain runs to 151 residues: Large ribosomal subunit protein uL15 (151 aa).

Positions 1 to 51 are disordered; the sequence is MPLKIEDLKPTPGSRKPKKRLGRGIGSGLGKTAGKGHKGEKARGRGKIGRT. Positions 23–33 are enriched in gly residues; sequence RGIGSGLGKTA.

Belongs to the universal ribosomal protein uL15 family. As to quaternary structure, part of the 50S ribosomal subunit.

Its function is as follows. Binds to the 23S rRNA. The chain is Large ribosomal subunit protein uL15 from Petrotoga mobilis (strain DSM 10674 / SJ95).